A 348-amino-acid chain; its full sequence is Dual-specificity RNA methyltransferase RlmN (348 aa).

The Proton acceptor role is filled by E94. A Radical SAM core domain is found at 100 to 330 (GKHNWTACIS…TAIIRASRGR (231 aa)). A disulfide bridge links C107 with C336. [4Fe-4S] cluster contacts are provided by C114, C118, and C121. S-adenosyl-L-methionine-binding positions include 163-164 (GE), S195, 217-219 (SLN), and N293. The active-site S-methylcysteine intermediate is the C336.

It belongs to the radical SAM superfamily. RlmN family. The cofactor is [4Fe-4S] cluster.

The protein localises to the cytoplasm. The catalysed reaction is adenosine(2503) in 23S rRNA + 2 reduced [2Fe-2S]-[ferredoxin] + 2 S-adenosyl-L-methionine = 2-methyladenosine(2503) in 23S rRNA + 5'-deoxyadenosine + L-methionine + 2 oxidized [2Fe-2S]-[ferredoxin] + S-adenosyl-L-homocysteine. The enzyme catalyses adenosine(37) in tRNA + 2 reduced [2Fe-2S]-[ferredoxin] + 2 S-adenosyl-L-methionine = 2-methyladenosine(37) in tRNA + 5'-deoxyadenosine + L-methionine + 2 oxidized [2Fe-2S]-[ferredoxin] + S-adenosyl-L-homocysteine. Specifically methylates position 2 of adenine 2503 in 23S rRNA and position 2 of adenine 37 in tRNAs. m2A2503 modification seems to play a crucial role in the proofreading step occurring at the peptidyl transferase center and thus would serve to optimize ribosomal fidelity. This Syntrophus aciditrophicus (strain SB) protein is Dual-specificity RNA methyltransferase RlmN.